A 151-amino-acid chain; its full sequence is Deazaflavin-dependent nitroreductase (151 aa).

Coenzyme F420-(gamma-Glu)n is bound by residues 54–56 (RKT), 60–65 (RVNPLY), 76–79 (AASK), 87–91 (MWYLN), and tyrosine 133.

The protein belongs to the F420H(2)-dependent quinone reductase family.

Its subcellular location is the cell membrane. It catalyses the reaction oxidized coenzyme F420-(gamma-L-Glu)(n) + a quinol + H(+) = reduced coenzyme F420-(gamma-L-Glu)(n) + a quinone. Functionally, involved in a F420-dependent anti-oxidant mechanism that protects M.tuberculosis against oxidative stress and bactericidal agents. Catalyzes the F420H(2)-dependent two-electron reduction of quinones to dihydroquinones, thereby preventing the formation of cytotoxic semiquinones obtained by the one-electron reduction pathway. In vitro, catalyzes the reduction of both benzoquinone and naphthoquinone analogs; since menaquinone is the sole quinone electron carrier in the respiratory chain in M.tuberculosis, the physiological electron acceptor for Fqr-mediated F420H(2) oxidation is therefore likely to be the endogenous menaquinone found in the membrane fraction of M.tuberculosis. Is able to use F420 species with two and five glutamate residues in its polyglutamate tail. Cannot use NADH or NADPH instead of F420H(2) as the electron donor. Is involved in the bioreductive activation of bicyclic 4-nitroimidazole prodrugs such as PA-824 and delamanid developed for anti-tuberculosis therapy against both replicating and persistent bacteria. It converts PA-824 into three primary metabolites resulting from reduction of the imidazole ring at C-3; the major one is the corresponding des-nitroimidazole that generates lethal reactive nitrogen species, including nitric oxide (NO), which appears to be responsible for the anaerobic killing activity. Ddn uses the reduced F420 produced by FGD1 to activate PA-824. Delamanid (OPC-67683) is also reduced by Ddn to its des-nitro form. This is Deazaflavin-dependent nitroreductase (ddn) from Mycobacterium tuberculosis (strain CDC 1551 / Oshkosh).